The primary structure comprises 423 residues: Mannose-6-phosphate isomerase (423 aa).

The residue at position 2 (A2) is an N-acetylalanine. S102 and S108 each carry phosphoserine. Positions 110, 112, 137, and 276 each coordinate Zn(2+). Residue R295 is part of the active site.

This sequence belongs to the mannose-6-phosphate isomerase type 1 family. Zn(2+) is required as a cofactor. As to expression, expressed in all tissues, but more abundant in heart, brain and skeletal muscle.

The protein resides in the cytoplasm. The enzyme catalyses D-mannose 6-phosphate = D-fructose 6-phosphate. It functions in the pathway nucleotide-sugar biosynthesis; GDP-alpha-D-mannose biosynthesis; alpha-D-mannose 1-phosphate from D-fructose 6-phosphate: step 1/2. Isomerase that catalyzes the interconversion of fructose-6-P and mannose-6-P and has a critical role in the supply of D-mannose derivatives required for many eukaryotic glycosylation reactions. The protein is Mannose-6-phosphate isomerase of Homo sapiens (Human).